The sequence spans 561 residues: DNA ligase B (561 aa).

Lys125 functions as the N6-AMP-lysine intermediate in the catalytic mechanism.

This sequence belongs to the NAD-dependent DNA ligase family. LigB subfamily.

It carries out the reaction NAD(+) + (deoxyribonucleotide)n-3'-hydroxyl + 5'-phospho-(deoxyribonucleotide)m = (deoxyribonucleotide)n+m + AMP + beta-nicotinamide D-nucleotide.. Functionally, catalyzes the formation of phosphodiester linkages between 5'-phosphoryl and 3'-hydroxyl groups in double-stranded DNA using NAD as a coenzyme and as the energy source for the reaction. The protein is DNA ligase B of Salmonella paratyphi B (strain ATCC BAA-1250 / SPB7).